Reading from the N-terminus, the 409-residue chain is TAR DNA-binding protein 43 (409 aa).

2 consecutive RRM domains span residues 105–200 and 191–262; these read SDLI…RCTE and RKVF…TAEP. Disordered regions lie at residues 260–302 and 341–409; these read AEPK…NQGG and SQQN…GWGM. A compositionally biased stretch (basic and acidic residues) spans 261–274; sequence EPKHNNNRQLERGG. Over residues 281–292 the composition is skewed to polar residues; the sequence is FGNQGYPNSRPS. Composition is skewed to low complexity over residues 341 to 387 and 395 to 409; these read SQQN…PNAG and GFSSSMESKSSGWGM.

In terms of assembly, homodimer.

It localises to the nucleus. The protein resides in the cytoplasm. Its subcellular location is the stress granule. The protein localises to the mitochondrion. Functionally, probably involved in transcriptional repression. May play a role in the maintenance of the circadian clock periodicity. This Xenopus tropicalis (Western clawed frog) protein is TAR DNA-binding protein 43 (tardbp).